We begin with the raw amino-acid sequence, 1447 residues long: Sister chromatid cohesion protein PDS5 homolog B (1447 aa).

One copy of the HEAT repeat lies at 383 to 419 (LLVNDHLLNFVRERTLDKRWRVRKEAMMGLAQIYKKY). Positions 1117–1447 (KSFFTPGKPK…RRRSAKRERR (331 aa)) are disordered. Lysine 1136 carries the post-translational modification N6-acetyllysine. Residues 1137–1155 (PLSSAGKQSQTKSSRMETV) are compositionally biased toward polar residues. Phosphoserine is present on residues serine 1140, serine 1162, serine 1166, serine 1176, serine 1182, and serine 1191. Residues 1156–1167 (SNASSSSNPSSP) are compositionally biased toward low complexity. Residues 1172–1184 (GRLDSSEMDHSEN) show a composition bias toward basic and acidic residues. Composition is skewed to basic and acidic residues over residues 1196 to 1214 (KKSDKRDDSDLVRSELEKP) and 1225 to 1243 (QEEKLGMDDLTKLVQEQKP). Positions 1245–1254 (GSQRSRKRGH) are enriched in basic residues. Residues 1249 to 1261 (SRKRGHTASESDE) constitute a DNA-binding region (a.T hook 1). Phosphothreonine is present on threonine 1255. Phosphoserine is present on residues serine 1257 and serine 1259. A compositionally biased stretch (basic and acidic residues) spans 1265–1274 (PEEKRLKEDI). Phosphoserine is present on serine 1283. The segment at residues 1287-1299 (KGKRGRPPKPLGG) is a DNA-binding region (a.T hook 2). Over residues 1310 to 1319 (TSKKGSKKKS) the composition is skewed to basic residues. Phosphoserine is present on residues serine 1319 and serine 1334. Basic residues predominate over residues 1342 to 1353 (KSKQHRVSRRAQ). Polar residues predominate over residues 1355–1372 (RAESPESSAIESTQSTPQ). Residues serine 1358 and serine 1366 each carry the phosphoserine modification. Threonine 1367 carries the post-translational modification Phosphothreonine. Serine 1369 carries the phosphoserine modification. A phosphothreonine mark is found at threonine 1370 and threonine 1381. The a.T hook 3 DNA-binding region spans 1372–1384 (QKGRGRPSKTPSP). Positions 1379 to 1388 (SKTPSPSQPK) are enriched in low complexity. A phosphoserine mark is found at serine 1383 and serine 1417. Residues 1422–1432 (IPQEETEEEEV) show a composition bias toward acidic residues. Residues 1437-1447 (VRRRSAKRERR) show a composition bias toward basic residues.

Belongs to the PDS5 family. In terms of assembly, interacts with the cohesin complex. Interacts with RAD21; the interaction is direct. Interacts with WAPL (via FGF motifs) or CDCA5 (via the FGF motif); the interaction is direct, cohesin-dependent and competitive. As to expression, widely expressed.

The protein resides in the nucleus. In terms of biological role, regulator of sister chromatid cohesion in mitosis which may stabilize cohesin complex association with chromatin. May couple sister chromatid cohesion during mitosis to DNA replication. Cohesion ensures that chromosome partitioning is accurate in both meiotic and mitotic cells and plays an important role in DNA repair. Plays a role in androgen-induced proliferative arrest in prostate cells. This is Sister chromatid cohesion protein PDS5 homolog B (PDS5B) from Homo sapiens (Human).